The chain runs to 122 residues: Large ribosomal subunit protein uL22c (122 aa).

It belongs to the universal ribosomal protein uL22 family. Part of the 50S ribosomal subunit.

It is found in the plastid. It localises to the chloroplast. Functionally, this protein binds specifically to 23S rRNA. Its function is as follows. The globular domain of the protein is located near the polypeptide exit tunnel on the outside of the subunit, while an extended beta-hairpin is found that lines the wall of the exit tunnel in the center of the 70S ribosome. In Adiantum capillus-veneris (Maidenhair fern), this protein is Large ribosomal subunit protein uL22c (rpl22).